The sequence spans 447 residues: Argininosuccinate synthase (447 aa).

ATP is bound by residues 17–25 (AFSGGLDTS) and A43. Y99 is a binding site for L-citrulline. ATP-binding residues include G129 and T131. Positions 131, 135, and 136 each coordinate L-aspartate. N135 is an L-citrulline binding site. D136 provides a ligand contact to ATP. L-citrulline is bound by residues R139 and S192. ATP is bound at residue D194. Residues T201, E203, and E280 each contribute to the L-citrulline site.

This sequence belongs to the argininosuccinate synthase family. Type 2 subfamily. Homotetramer.

The protein localises to the cytoplasm. The catalysed reaction is L-citrulline + L-aspartate + ATP = 2-(N(omega)-L-arginino)succinate + AMP + diphosphate + H(+). The protein operates within amino-acid biosynthesis; L-arginine biosynthesis; L-arginine from L-ornithine and carbamoyl phosphate: step 2/3. This chain is Argininosuccinate synthase, found in Escherichia coli O1:K1 / APEC.